Reading from the N-terminus, the 579-residue chain is Probable serine/threonine-protein kinase kinY (579 aa).

The segment at 1-24 (MINGEQTMVEDELPDQGKPMSDES) is disordered. The 278-residue stretch at 32–309 (LKVGESIGSG…HVLKQLTSLF (278 aa)) folds into the Protein kinase domain. Residues 38–46 (IGSGAYGIV) and Lys59 contribute to the ATP site. Asp167 (proton acceptor) is an active-site residue.

The protein belongs to the protein kinase superfamily. TKL Ser/Thr protein kinase family.

The catalysed reaction is L-seryl-[protein] + ATP = O-phospho-L-seryl-[protein] + ADP + H(+). The enzyme catalyses L-threonyl-[protein] + ATP = O-phospho-L-threonyl-[protein] + ADP + H(+). This chain is Probable serine/threonine-protein kinase kinY (kinY), found in Dictyostelium discoideum (Social amoeba).